The primary structure comprises 201 residues: TATA-box-binding protein 2 (201 aa).

A run of 2 repeats spans residues 26–102 (LQNI…ARII) and 116–193 (IQNI…YPVL).

It belongs to the TBP family. In terms of assembly, belongs to the TFIID complex together with the TBP-associated factors (TAFs). Binds DNA as monomer.

It is found in the nucleus. In terms of biological role, general transcription factor that functions at the core of the DNA-binding multiprotein factor TFIID. Binding of TFIID to the TATA box is the initial transcriptional step of the pre-initiation complex (PIC), playing a role in the activation of eukaryotic genes transcribed by RNA polymerase II. The polypeptide is TATA-box-binding protein 2 (TBP2) (Triticum aestivum (Wheat)).